Here is a 611-residue protein sequence, read N- to C-terminus: Dihydroxy-acid dehydratase (611 aa).

D81 contacts Mg(2+). C122 is a binding site for [2Fe-2S] cluster. Positions 123 and 124 each coordinate Mg(2+). K124 bears the N6-carboxylysine mark. Residue C195 participates in [2Fe-2S] cluster binding. Position 491 (E491) interacts with Mg(2+). The active-site Proton acceptor is the S517.

The protein belongs to the IlvD/Edd family. Homodimer. [2Fe-2S] cluster serves as cofactor. The cofactor is Mg(2+).

It catalyses the reaction (2R)-2,3-dihydroxy-3-methylbutanoate = 3-methyl-2-oxobutanoate + H2O. The enzyme catalyses (2R,3R)-2,3-dihydroxy-3-methylpentanoate = (S)-3-methyl-2-oxopentanoate + H2O. The protein operates within amino-acid biosynthesis; L-isoleucine biosynthesis; L-isoleucine from 2-oxobutanoate: step 3/4. It functions in the pathway amino-acid biosynthesis; L-valine biosynthesis; L-valine from pyruvate: step 3/4. In terms of biological role, functions in the biosynthesis of branched-chain amino acids. Catalyzes the dehydration of (2R,3R)-2,3-dihydroxy-3-methylpentanoate (2,3-dihydroxy-3-methylvalerate) into 2-oxo-3-methylpentanoate (2-oxo-3-methylvalerate) and of (2R)-2,3-dihydroxy-3-methylbutanoate (2,3-dihydroxyisovalerate) into 2-oxo-3-methylbutanoate (2-oxoisovalerate), the penultimate precursor to L-isoleucine and L-valine, respectively. The protein is Dihydroxy-acid dehydratase of Glaesserella parasuis serovar 5 (strain SH0165) (Haemophilus parasuis).